The primary structure comprises 117 residues: Large ribosomal subunit protein uL18 (117 aa).

This sequence belongs to the universal ribosomal protein uL18 family. In terms of assembly, part of the 50S ribosomal subunit; part of the 5S rRNA/L5/L18/L25 subcomplex. Contacts the 5S and 23S rRNAs.

This is one of the proteins that bind and probably mediate the attachment of the 5S RNA into the large ribosomal subunit, where it forms part of the central protuberance. The protein is Large ribosomal subunit protein uL18 of Klebsiella pneumoniae (strain 342).